Consider the following 422-residue polypeptide: Sphingomyelin phosphodiesterase 2 (422 aa).

A Mg(2+)-binding site is contributed by Glu-49. His-272 (proton acceptor) is an active-site residue. 2 helical membrane-spanning segments follow: residues 325-345 (ALFG…CVLA) and 354-374 (AIML…VYLF). A disordered region spans residues 397-422 (TETQDLGSEPHPTHCRQQEADRAEEK). Over residues 412 to 422 (RQQEADRAEEK) the composition is skewed to basic and acidic residues.

The protein belongs to the neutral sphingomyelinase family. Mg(2+) serves as cofactor.

The protein resides in the membrane. The catalysed reaction is a sphingomyelin + H2O = phosphocholine + an N-acylsphing-4-enine + H(+). It catalyses the reaction 1-O-octadecyl-sn-glycero-3-phosphocholine + H2O = 1-O-octadecyl-sn-glycerol + phosphocholine + H(+). The enzyme catalyses an N-(acyl)-sphingosylphosphocholine + H2O = an N-acyl-sphingoid base + phosphocholine + H(+). It carries out the reaction 1-hexadecanoyl-sn-glycero-3-phosphocholine + H2O = 1-hexadecanoyl-sn-glycerol + phosphocholine + H(+). The catalysed reaction is a sphingosylphosphocholine + H2O = a sphingoid base + phosphocholine + H(+). It catalyses the reaction 1-O-hexadecyl-sn-glycero-3-phosphocholine + H2O = 1-O-hexadecyl-sn-glycerol + phosphocholine + H(+). It participates in lipid metabolism; sphingolipid metabolism. Functionally, catalyzes the hydrolysis of sphingomyelin to form ceramide and phosphocholine. Ceramide mediates numerous cellular functions, such as apoptosis and growth arrest, and is capable of regulating these 2 cellular events independently. Also hydrolyzes sphingosylphosphocholine. Hydrolyze 1-acyl-2-lyso-sn-glycero-3-phosphocholine (lyso-PC) and 1-O-alkyl-2-lyso-sn-glycero-3-phosphocholine (lyso-platelet-activating factor). This Rattus norvegicus (Rat) protein is Sphingomyelin phosphodiesterase 2 (Smpd2).